Here is a 328-residue protein sequence, read N- to C-terminus: HTH-type transcriptional regulator MalR (328 aa).

The HTH lacI-type domain occupies proline 2–serine 57. The segment at residues isoleucine 5–glutamine 24 is a DNA-binding region (H-T-H motif). The inducer binding stretch occupies residues threonine 173 to arginine 218. Positions asparagine 282–serine 291 are dimerization.

Transcriptional repressor of the maltosaccharide utilization operons malxCD and malMP. The protein is HTH-type transcriptional regulator MalR (malR) of Streptococcus pneumoniae serotype 4 (strain ATCC BAA-334 / TIGR4).